A 130-amino-acid chain; its full sequence is L-ectoine synthase (130 aa).

Belongs to the ectoine synthase family.

The enzyme catalyses (2S)-4-acetamido-2-aminobutanoate = L-ectoine + H2O. The protein operates within amine and polyamine biosynthesis; ectoine biosynthesis; L-ectoine from L-aspartate 4-semialdehyde: step 3/3. Its function is as follows. Catalyzes the circularization of gamma-N-acetyl-alpha,gamma-diaminobutyric acid (ADABA) to ectoine (1,4,5,6-tetrahydro-2-methyl-4-pyrimidine carboxylic acid), which is an excellent osmoprotectant. The polypeptide is L-ectoine synthase (Mycobacteroides abscessus (strain ATCC 19977 / DSM 44196 / CCUG 20993 / CIP 104536 / JCM 13569 / NCTC 13031 / TMC 1543 / L948) (Mycobacterium abscessus)).